The following is a 23-amino-acid chain: Cytochrome c3-1 (23 aa).

Positions 1–23 are disordered; that stretch reads AAPKAPADGLKMDKTKQXVVFNH. A heme-binding site is contributed by H23.

In terms of processing, binds 4 heme groups per subunit.

It localises to the periplasm. Its function is as follows. Participates in sulfate respiration coupled with phosphorylation by transferring electrons from the enzyme dehydrogenase to ferredoxin. The sequence is that of Cytochrome c3-1 from Nitratidesulfovibrio vulgaris (Desulfovibrio vulgaris).